The chain runs to 180 residues: Glycoprotein Xg (180 aa).

A signal peptide spans 1–21 (MESWWGLPCLAFLCFLMHARG). Residues 22–142 (QRDFDLADAL…GNPEGNMVAK (121 aa)) are Extracellular-facing. A disordered region spans residues 28–133 (ADALDDPEPT…HGGDHHSTYG (106 aa)). The span at 47–57 (KPKPPYYPQPE) shows a compositional bias: pro residues. Residues 143–163 (IVSPIVSVVVVTLLGAAASYF) traverse the membrane as a helical segment. The Cytoplasmic segment spans residues 164–180 (KLNNRRNCFRTHEPENV).

The protein belongs to the CD99 family. Post-translationally, O-glycosylated. As to expression, expressed in erythroid tissues, including thymus, bone marrow and fetal liver, and in several nonerythroid tissues, such as heart, placenta, skeletal muscle, thyroid and trachea, as well as in skin fibroblasts. Expression is low or undetectable in other tissues.

It localises to the cell membrane. This chain is Glycoprotein Xg (XG), found in Homo sapiens (Human).